The primary structure comprises 299 residues: Putative S-adenosyl-L-methionine-dependent methyltransferase MAB_0027c (299 aa).

Residues D126 and 155–156 (DL) contribute to the S-adenosyl-L-methionine site.

This sequence belongs to the UPF0677 family.

Exhibits S-adenosyl-L-methionine-dependent methyltransferase activity. The polypeptide is Putative S-adenosyl-L-methionine-dependent methyltransferase MAB_0027c (Mycobacteroides abscessus (strain ATCC 19977 / DSM 44196 / CCUG 20993 / CIP 104536 / JCM 13569 / NCTC 13031 / TMC 1543 / L948) (Mycobacterium abscessus)).